The primary structure comprises 121 residues: Small ribosomal subunit protein uS13 (121 aa).

The interval Pro96–Lys121 is disordered. Basic residues predominate over residues Ala106 to Lys121.

This sequence belongs to the universal ribosomal protein uS13 family. As to quaternary structure, part of the 30S ribosomal subunit. Forms a loose heterodimer with protein S19. Forms two bridges to the 50S subunit in the 70S ribosome.

Located at the top of the head of the 30S subunit, it contacts several helices of the 16S rRNA. In the 70S ribosome it contacts the 23S rRNA (bridge B1a) and protein L5 of the 50S subunit (bridge B1b), connecting the 2 subunits; these bridges are implicated in subunit movement. Contacts the tRNAs in the A and P-sites. The protein is Small ribosomal subunit protein uS13 of Streptococcus pyogenes serotype M3 (strain SSI-1).